We begin with the raw amino-acid sequence, 101 residues long: NAD(P)H-quinone oxidoreductase subunit 4L, chloroplastic (101 aa).

Helical transmembrane passes span 2 to 22 (IFEH…YGLI), 32 to 52 (MCLE…SDFF), and 61 to 81 (IFSI…PAIV).

It belongs to the complex I subunit 4L family. NDH is composed of at least 16 different subunits, 5 of which are encoded in the nucleus.

The protein localises to the plastid. The protein resides in the chloroplast thylakoid membrane. The enzyme catalyses a plastoquinone + NADH + (n+1) H(+)(in) = a plastoquinol + NAD(+) + n H(+)(out). It carries out the reaction a plastoquinone + NADPH + (n+1) H(+)(in) = a plastoquinol + NADP(+) + n H(+)(out). In terms of biological role, NDH shuttles electrons from NAD(P)H:plastoquinone, via FMN and iron-sulfur (Fe-S) centers, to quinones in the photosynthetic chain and possibly in a chloroplast respiratory chain. The immediate electron acceptor for the enzyme in this species is believed to be plastoquinone. Couples the redox reaction to proton translocation, and thus conserves the redox energy in a proton gradient. This is NAD(P)H-quinone oxidoreductase subunit 4L, chloroplastic from Phaseolus vulgaris (Kidney bean).